Reading from the N-terminus, the 812-residue chain is Probable inorganic carbon transporter subunit DabA (812 aa).

Positions 339, 341, 501, and 516 each coordinate Zn(2+).

The protein belongs to the inorganic carbon transporter (TC 9.A.2) DabA family. Forms a complex with DabB. Requires Zn(2+) as cofactor.

It is found in the cell inner membrane. Its function is as follows. Part of an energy-coupled inorganic carbon pump. This is Probable inorganic carbon transporter subunit DabA from Xanthomonas axonopodis pv. citri (strain 306).